We begin with the raw amino-acid sequence, 248 residues long: Probable transcriptional regulatory protein Psyr_1407 (248 aa).

It belongs to the TACO1 family.

Its subcellular location is the cytoplasm. This Pseudomonas syringae pv. syringae (strain B728a) protein is Probable transcriptional regulatory protein Psyr_1407.